The chain runs to 119 residues: Ribonuclease P protein component (119 aa).

Belongs to the RnpA family. As to quaternary structure, consists of a catalytic RNA component (M1 or rnpB) and a protein subunit.

The enzyme catalyses Endonucleolytic cleavage of RNA, removing 5'-extranucleotides from tRNA precursor.. In terms of biological role, RNaseP catalyzes the removal of the 5'-leader sequence from pre-tRNA to produce the mature 5'-terminus. It can also cleave other RNA substrates such as 4.5S RNA. The protein component plays an auxiliary but essential role in vivo by binding to the 5'-leader sequence and broadening the substrate specificity of the ribozyme. This Streptococcus mutans serotype c (strain ATCC 700610 / UA159) protein is Ribonuclease P protein component.